The chain runs to 597 residues: tRNA uridine 5-carboxymethylaminomethyl modification enzyme MnmG (597 aa).

An FAD-binding site is contributed by Gly11–Gly16. Ser275 to Tyr289 serves as a coordination point for NAD(+).

This sequence belongs to the MnmG family. In terms of assembly, homodimer. Heterotetramer of two MnmE and two MnmG subunits. The cofactor is FAD.

The protein localises to the cytoplasm. Functionally, NAD-binding protein involved in the addition of a carboxymethylaminomethyl (cmnm) group at the wobble position (U34) of certain tRNAs, forming tRNA-cmnm(5)s(2)U34. This is tRNA uridine 5-carboxymethylaminomethyl modification enzyme MnmG from Endomicrobium trichonymphae.